A 252-amino-acid polypeptide reads, in one-letter code: Mediator of RNA polymerase II transcription subunit 8 (252 aa).

Positions 6 to 30 form a coiled coil; the sequence is QDQIKTLEQSRQRLVQLTRSLASLI. Residues 170–252 form a disordered region; sequence RQLEDEDEEE…MTTGIPPTQR (83 aa). A compositionally biased stretch (acidic residues) spans 173–196; the sequence is EDEDEEESESESEEEGEGEEEEME.

Belongs to the Mediator complex subunit 8 family. As to quaternary structure, component of the Mediator complex.

It localises to the nucleus. In terms of biological role, component of the Mediator complex, a coactivator involved in the regulated transcription of nearly all RNA polymerase II-dependent genes. Mediator functions as a bridge to convey information from gene-specific regulatory proteins to the basal RNA polymerase II transcription machinery. Mediator is recruited to promoters by direct interactions with regulatory proteins and serves as a scaffold for the assembly of a functional preinitiation complex with RNA polymerase II and the general transcription factors. The polypeptide is Mediator of RNA polymerase II transcription subunit 8 (med8) (Neosartorya fischeri (strain ATCC 1020 / DSM 3700 / CBS 544.65 / FGSC A1164 / JCM 1740 / NRRL 181 / WB 181) (Aspergillus fischerianus)).